We begin with the raw amino-acid sequence, 419 residues long: Serine hydroxymethyltransferase (419 aa).

(6S)-5,6,7,8-tetrahydrofolate contacts are provided by residues L118 and 122-124 (GHL). K226 carries the post-translational modification N6-(pyridoxal phosphate)lysine. A (6S)-5,6,7,8-tetrahydrofolate-binding site is contributed by E242.

This sequence belongs to the SHMT family. Homodimer. The cofactor is pyridoxal 5'-phosphate.

The protein resides in the cytoplasm. It carries out the reaction (6R)-5,10-methylene-5,6,7,8-tetrahydrofolate + glycine + H2O = (6S)-5,6,7,8-tetrahydrofolate + L-serine. Its pathway is one-carbon metabolism; tetrahydrofolate interconversion. The protein operates within amino-acid biosynthesis; glycine biosynthesis; glycine from L-serine: step 1/1. Catalyzes the reversible interconversion of serine and glycine with tetrahydrofolate (THF) serving as the one-carbon carrier. This reaction serves as the major source of one-carbon groups required for the biosynthesis of purines, thymidylate, methionine, and other important biomolecules. Also exhibits THF-independent aldolase activity toward beta-hydroxyamino acids, producing glycine and aldehydes, via a retro-aldol mechanism. This is Serine hydroxymethyltransferase from Metamycoplasma arthritidis (strain 158L3-1) (Mycoplasma arthritidis).